A 181-amino-acid chain; its full sequence is Mating-type M-specific polypeptide Mc (181 aa).

The segment at residues 103–171 (TPRPPNAFIL…QHQKMYPGYK (69 aa)) is a DNA-binding region (HMG box).

The protein localises to the nucleus. Its function is as follows. Mating type proteins are sequence specific DNA-binding proteins that act as master switches in yeast differentiation by controlling gene expression in a cell type-specific fashion. Positive regulator of MFM genes. The HMG box recognizes the DNA sequence 5'-AACAAAG-3'. Required for conjugation and efficient meiosis. The polypeptide is Mating-type M-specific polypeptide Mc (matMc) (Schizosaccharomyces kambucha (Fission yeast)).